Here is a 352-residue protein sequence, read N- to C-terminus: C-C chemokine receptor type 5 (352 aa).

Topologically, residues 1-30 (MDYQVSSPTYDIDYYTSEPCQKINVKQIAA) are extracellular. Tyr-3 is modified (sulfotyrosine). Ser-6 and Ser-7 each carry an O-linked (GalNAc...) serine glycan. Tyr-10, Tyr-14, and Tyr-15 each carry sulfotyrosine. 2 cysteine pairs are disulfide-bonded: Cys-20-Cys-269 and Cys-101-Cys-178. Residues 31 to 58 (RLLPPLYSLVFIFGFVGNILVVLILINC) traverse the membrane as a helical segment. Topologically, residues 59–68 (KRLKSMTDIY) are cytoplasmic. Residues 69 to 89 (LLNLAISDLLFLLTVPFWAHY) form a helical membrane-spanning segment. Topologically, residues 90–102 (AAAQWNFGNTMCQ) are extracellular. The chain crosses the membrane as a helical span at residues 103-124 (LLTGLYFIGFFSGIFFIILLTI). The Cytoplasmic segment spans residues 125–141 (DRYLAIVHAVFALKART). Residues 142 to 166 (VTFGVVTSVITWVVAVFASLPGIIF) form a helical membrane-spanning segment. Residues 167–198 (TRYQREGLHYTCSSHFPYSQYQFWKNFQTLKI) lie on the Extracellular side of the membrane. Residues 199 to 218 (VILGLVLPLLVMVICYSGIL) traverse the membrane as a helical segment. Topologically, residues 219–235 (KTLLRCRNEKKRHRAVR) are cytoplasmic. The chain crosses the membrane as a helical span at residues 236 to 260 (LIFTIMIVYFLFWAPYNIVLLLNTF). The Extracellular portion of the chain corresponds to 261 to 277 (QEFFGLNNCSSSNRLDQ). Residues 278–301 (AMQVTETLGMTHCCINPIIYAFVG) traverse the membrane as a helical segment. The Cytoplasmic segment spans residues 302–352 (EKFRNYLLVFFQKHIAKRFCKCCSIFQQEAPERASSVYTRSTGEQETSVGL). Residues Cys-321, Cys-323, and Cys-324 are each lipidated (S-palmitoyl cysteine). 4 positions are modified to phosphoserine; by BARK1: Ser-336, Ser-337, Ser-342, and Ser-349.

This sequence belongs to the G-protein coupled receptor 1 family. As to quaternary structure, interacts with PRAF2. Efficient ligand binding to CCL3/MIP-1alpha and CCL4/MIP-1beta requires sulfation, O-glycosylation and sialic acid modifications. Glycosylation on Ser-6 is required for efficient binding of CCL4. Interacts with GRK2. Interacts with ARRB1 and ARRB2. Interacts with CNIH4. Interacts with S100A4; this interaction stimulates T-lymphocyte chemotaxis. In terms of processing, sulfated on at least 2 of the N-terminal tyrosines. Sulfation is required for efficient binding of the chemokines, CCL3 and CCL4. Palmitoylation in the C-terminal is important for cell surface expression. Post-translationally, phosphorylation on serine residues in the C-terminal is stimulated by binding CC chemokines especially by APO-RANTES. In terms of processing, O-glycosylated, but not N-glycosylated. Ser-6 appears to be the major site even if Ser-7 may be also O-glycosylated. Also sialylated glycans present which contribute to chemokine binding. Thr-16 and Ser-17 may also be glycosylated and, if so, with small moieties such as a T-antigen.

The protein localises to the cell membrane. In terms of biological role, receptor for a number of inflammatory CC-chemokines including CCL3/MIP-1-alpha, CCL4/MIP-1-beta and RANTES and subsequently transduces a signal by increasing the intracellular calcium ion level. May play a role in the control of granulocytic lineage proliferation or differentiation. Participates in T-lymphocyte migration to the infection site by acting as a chemotactic receptor. The sequence is that of C-C chemokine receptor type 5 (CCR5) from Erythrocebus patas (Red guenon).